We begin with the raw amino-acid sequence, 301 residues long: Rhodopsin (301 aa).

Residues leucine 1–methionine 18 lie on the Extracellular side of the membrane. Residues tyrosine 19–valine 43 traverse the membrane as a helical segment. The Cytoplasmic portion of the chain corresponds to phenylalanine 44 to asparagine 55. A helical transmembrane segment spans residues leucine 56 to isoleucine 78. At threonine 79–cysteine 92 the chain is on the extracellular side. A disulfide bridge links cysteine 92 with cysteine 169. A helical transmembrane segment spans residues glutamate 93–phenylalanine 115. The short motif at aspartate 116–tyrosine 118 is the 'Ionic lock' involved in activated form stabilization element. Residues aspartate 116–lysine 134 lie on the Cytoplasmic side of the membrane. Residues alanine 135–phenylalanine 155 traverse the membrane as a helical segment. Residues glycine 156 to serine 182 lie on the Extracellular side of the membrane. Asparagine 165 carries an N-linked (GlcNAc...) asparagine glycan. The helical transmembrane segment at tyrosine 183–valine 204 threads the bilayer. At phenylalanine 205 to lysine 245 the chain is on the cytoplasmic side. A helical membrane pass occupies residues isoleucine 246–valine 267. The Extracellular portion of the chain corresponds to glycine 268–valine 278. A helical membrane pass occupies residues tyrosine 279 to isoleucine 300. The residue at position 288 (lysine 288) is an N6-(retinylidene)lysine.

Belongs to the G-protein coupled receptor 1 family. Opsin subfamily. As to quaternary structure, homodimer. Interacts with GNAQ. Contains one covalently linked retinal chromophore.

It localises to the cell projection. Its subcellular location is the rhabdomere membrane. Functionally, photoreceptor required for image-forming vision at low light intensity. Can use both retinal and 3-dehydroretinal as visual pigment. Light-induced isomerization of 11-cis to all-trans retinal triggers a conformational change that activates signaling via G-proteins. Signaling via GNAQ probably mediates the activation of phospholipase C. The chain is Rhodopsin (RHO) from Lacunicambarus ludovicianus (Painted devil crayfish).